The following is a 589-amino-acid chain: Arginine--tRNA ligase (589 aa).

The 'HIGH' region signature appears at Pro132–His142.

The protein belongs to the class-I aminoacyl-tRNA synthetase family. Monomer.

Its subcellular location is the cytoplasm. It catalyses the reaction tRNA(Arg) + L-arginine + ATP = L-arginyl-tRNA(Arg) + AMP + diphosphate. The sequence is that of Arginine--tRNA ligase from Treponema pallidum subsp. pallidum (strain SS14).